The following is a 161-amino-acid chain: Nucleotide-binding protein Shal_3198 (161 aa).

Belongs to the YajQ family.

Nucleotide-binding protein. This Shewanella halifaxensis (strain HAW-EB4) protein is Nucleotide-binding protein Shal_3198.